A 284-amino-acid chain; its full sequence is Diaminopimelate epimerase (284 aa).

3 residues coordinate substrate: Asn-20, Gln-53, and Asn-73. Cys-82 acts as the Proton donor in catalysis. Substrate contacts are provided by residues 83–84 (GN), Asn-167, Asn-200, and 218–219 (ER). Cys-227 serves as the catalytic Proton acceptor. Position 228-229 (228-229 (GS)) interacts with substrate.

This sequence belongs to the diaminopimelate epimerase family. In terms of assembly, homodimer.

It is found in the cytoplasm. It carries out the reaction (2S,6S)-2,6-diaminopimelate = meso-2,6-diaminopimelate. The protein operates within amino-acid biosynthesis; L-lysine biosynthesis via DAP pathway; DL-2,6-diaminopimelate from LL-2,6-diaminopimelate: step 1/1. Its function is as follows. Catalyzes the stereoinversion of LL-2,6-diaminopimelate (L,L-DAP) to meso-diaminopimelate (meso-DAP), a precursor of L-lysine and an essential component of the bacterial peptidoglycan. In Xanthomonas euvesicatoria pv. vesicatoria (strain 85-10) (Xanthomonas campestris pv. vesicatoria), this protein is Diaminopimelate epimerase.